A 741-amino-acid chain; its full sequence is Phosphoribosylformylglycinamidine synthase subunit PurL (741 aa).

Histidine 53 is a catalytic residue. Tyrosine 56 and lysine 95 together coordinate ATP. Glutamate 97 serves as a coordination point for Mg(2+). Residues 98–101 and arginine 120 each bind substrate; that span reads SHNH. The Proton acceptor role is filled by histidine 99. Aspartate 121 provides a ligand contact to Mg(2+). Glutamine 244 contacts substrate. A Mg(2+)-binding site is contributed by aspartate 274. Residue 318 to 320 participates in substrate binding; the sequence is ESQ. 2 residues coordinate ATP: aspartate 501 and glycine 538. Asparagine 539 is a binding site for Mg(2+). Serine 541 contributes to the substrate binding site.

This sequence belongs to the FGAMS family. Monomer. Part of the FGAM synthase complex composed of 1 PurL, 1 PurQ and 2 PurS subunits.

The protein resides in the cytoplasm. It catalyses the reaction N(2)-formyl-N(1)-(5-phospho-beta-D-ribosyl)glycinamide + L-glutamine + ATP + H2O = 2-formamido-N(1)-(5-O-phospho-beta-D-ribosyl)acetamidine + L-glutamate + ADP + phosphate + H(+). It participates in purine metabolism; IMP biosynthesis via de novo pathway; 5-amino-1-(5-phospho-D-ribosyl)imidazole from N(2)-formyl-N(1)-(5-phospho-D-ribosyl)glycinamide: step 1/2. Functionally, part of the phosphoribosylformylglycinamidine synthase complex involved in the purines biosynthetic pathway. Catalyzes the ATP-dependent conversion of formylglycinamide ribonucleotide (FGAR) and glutamine to yield formylglycinamidine ribonucleotide (FGAM) and glutamate. The FGAM synthase complex is composed of three subunits. PurQ produces an ammonia molecule by converting glutamine to glutamate. PurL transfers the ammonia molecule to FGAR to form FGAM in an ATP-dependent manner. PurS interacts with PurQ and PurL and is thought to assist in the transfer of the ammonia molecule from PurQ to PurL. The protein is Phosphoribosylformylglycinamidine synthase subunit PurL of Limosilactobacillus fermentum (strain NBRC 3956 / LMG 18251) (Lactobacillus fermentum).